A 500-amino-acid chain; its full sequence is Trehalose-6-phosphate synthase (500 aa).

R28 contributes to the D-glucose 6-phosphate binding site. 48-49 (GG) contacts UDP-alpha-D-glucose. The D-glucose 6-phosphate site is built by Y104 and D158. 2 residues coordinate UDP-alpha-D-glucose: R300 and K305. R338 lines the D-glucose 6-phosphate pocket. A UDP-alpha-D-glucose-binding site is contributed by 403–407 (LVAKE).

This sequence belongs to the glycosyltransferase 20 family. Homotetramer.

The enzyme catalyses ADP-alpha-D-glucose + D-glucose 6-phosphate = alpha,alpha-trehalose 6-phosphate + ADP + H(+). It carries out the reaction CDP-alpha-D-glucose + D-glucose 6-phosphate = alpha,alpha-trehalose 6-phosphate + CDP + H(+). The catalysed reaction is GDP-alpha-D-glucose + D-glucose 6-phosphate = alpha,alpha-trehalose 6-phosphate + GDP + H(+). It catalyses the reaction TDP-alpha-D-glucose + D-glucose 6-phosphate = 5-methyl-UDP + alpha,alpha-trehalose 6-phosphate + H(+). The enzyme catalyses D-glucose 6-phosphate + UDP-alpha-D-glucose = alpha,alpha-trehalose 6-phosphate + UDP + H(+). The protein operates within glycan biosynthesis; trehalose biosynthesis. Its function is as follows. Probably involved in the osmoprotection via the biosynthesis of trehalose and in the production of glycogen and alpha-glucan via the TreS-Pep2 branch involved in the biosynthesis of maltose-1-phosphate (M1P). Catalyzes the transfer of glucose from UDP-glucose (UDP-Glc) to D-glucose 6-phosphate (Glc-6-P) to form trehalose-6-phosphate. Probably also able to use ADP-Glc, CDP-Glc, GDP-Glc and TDP-Glc as glucosyl donors. This is Trehalose-6-phosphate synthase from Mycobacterium marinum (strain ATCC BAA-535 / M).